A 348-amino-acid polypeptide reads, in one-letter code: Probable dual-specificity RNA methyltransferase RlmN (348 aa).

Residue E93 is the Proton acceptor of the active site. Residues 99–333 (TEKRLTACLS…VSLRKSRGLD (235 aa)) enclose the Radical SAM core domain. A disulfide bond links C106 and C338. Residues C113, C117, and C120 each contribute to the [4Fe-4S] cluster site. Residues 160–161 (GE), S190, 219–221 (SLH), and N295 contribute to the S-adenosyl-L-methionine site. The active-site S-methylcysteine intermediate is the C338.

The protein belongs to the radical SAM superfamily. RlmN family. [4Fe-4S] cluster is required as a cofactor.

Its subcellular location is the cytoplasm. It carries out the reaction adenosine(2503) in 23S rRNA + 2 reduced [2Fe-2S]-[ferredoxin] + 2 S-adenosyl-L-methionine = 2-methyladenosine(2503) in 23S rRNA + 5'-deoxyadenosine + L-methionine + 2 oxidized [2Fe-2S]-[ferredoxin] + S-adenosyl-L-homocysteine. It catalyses the reaction adenosine(37) in tRNA + 2 reduced [2Fe-2S]-[ferredoxin] + 2 S-adenosyl-L-methionine = 2-methyladenosine(37) in tRNA + 5'-deoxyadenosine + L-methionine + 2 oxidized [2Fe-2S]-[ferredoxin] + S-adenosyl-L-homocysteine. Its function is as follows. Specifically methylates position 2 of adenine 2503 in 23S rRNA and position 2 of adenine 37 in tRNAs. In Prochlorococcus marinus (strain AS9601), this protein is Probable dual-specificity RNA methyltransferase RlmN.